The primary structure comprises 305 residues: N-acetylmuramic acid 6-phosphate etherase (305 aa).

Residues 1 to 24 are disordered; that stretch reads MTTPPSSPLSDPRRTEGVHPTHTD. Residues 11-24 show a composition bias toward basic and acidic residues; it reads DPRRTEGVHPTHTD. Residues 62–225 enclose the SIS domain; the sequence is ALPRLERGGR…SSALMVRLGK (164 aa). Catalysis depends on Glu90, which acts as the Proton donor. Glu121 is a catalytic residue.

This sequence belongs to the GCKR-like family. MurNAc-6-P etherase subfamily. In terms of assembly, homodimer.

The catalysed reaction is N-acetyl-D-muramate 6-phosphate + H2O = N-acetyl-D-glucosamine 6-phosphate + (R)-lactate. The protein operates within amino-sugar metabolism; N-acetylmuramate degradation. Specifically catalyzes the cleavage of the D-lactyl ether substituent of MurNAc 6-phosphate, producing GlcNAc 6-phosphate and D-lactate. This is N-acetylmuramic acid 6-phosphate etherase from Deinococcus geothermalis (strain DSM 11300 / CIP 105573 / AG-3a).